Here is a 274-residue protein sequence, read N- to C-terminus: 16S rRNA (guanine(1405)-N(7))-methyltransferase (274 aa).

S-adenosyl-L-methionine-binding positions include Phe64, 102 to 104 (HMS), Arg108, Ala133, Asp156, 182 to 183 (DL), Leu198, and Gln207.

The protein belongs to the methyltransferase superfamily. Aminoglycoside resistance family.

The catalysed reaction is guanosine(1405) in 16S rRNA + S-adenosyl-L-methionine = N(7)-methylguanosine(1405) in 16S rRNA + S-adenosyl-L-homocysteine. Specifically methylates the N(7) position of guanine 1405 in 16S rRNA. Confers resistance to aminoglycosides. In Micromonospora rosea, this protein is 16S rRNA (guanine(1405)-N(7))-methyltransferase (grm).